A 262-amino-acid polypeptide reads, in one-letter code: Ribosomal RNA small subunit methyltransferase A (262 aa).

S-adenosyl-L-methionine contacts are provided by Asn-13, Leu-15, Gly-40, Glu-61, Asp-85, and Asn-104.

It belongs to the class I-like SAM-binding methyltransferase superfamily. rRNA adenine N(6)-methyltransferase family. RsmA subfamily.

The protein localises to the cytoplasm. The enzyme catalyses adenosine(1518)/adenosine(1519) in 16S rRNA + 4 S-adenosyl-L-methionine = N(6)-dimethyladenosine(1518)/N(6)-dimethyladenosine(1519) in 16S rRNA + 4 S-adenosyl-L-homocysteine + 4 H(+). In terms of biological role, specifically dimethylates two adjacent adenosines (A1518 and A1519) in the loop of a conserved hairpin near the 3'-end of 16S rRNA in the 30S particle. May play a critical role in biogenesis of 30S subunits. The chain is Ribosomal RNA small subunit methyltransferase A from Chromobacterium violaceum (strain ATCC 12472 / DSM 30191 / JCM 1249 / CCUG 213 / NBRC 12614 / NCIMB 9131 / NCTC 9757 / MK).